We begin with the raw amino-acid sequence, 246 residues long: Biosynthetic peptidoglycan transglycosylase (246 aa).

A helical transmembrane segment spans residues 20 to 42 (WLRWLMAAPLLFAAASVLQVLIL).

It belongs to the glycosyltransferase 51 family.

It localises to the cell inner membrane. It carries out the reaction [GlcNAc-(1-&gt;4)-Mur2Ac(oyl-L-Ala-gamma-D-Glu-L-Lys-D-Ala-D-Ala)](n)-di-trans,octa-cis-undecaprenyl diphosphate + beta-D-GlcNAc-(1-&gt;4)-Mur2Ac(oyl-L-Ala-gamma-D-Glu-L-Lys-D-Ala-D-Ala)-di-trans,octa-cis-undecaprenyl diphosphate = [GlcNAc-(1-&gt;4)-Mur2Ac(oyl-L-Ala-gamma-D-Glu-L-Lys-D-Ala-D-Ala)](n+1)-di-trans,octa-cis-undecaprenyl diphosphate + di-trans,octa-cis-undecaprenyl diphosphate + H(+). It functions in the pathway cell wall biogenesis; peptidoglycan biosynthesis. In terms of biological role, peptidoglycan polymerase that catalyzes glycan chain elongation from lipid-linked precursors. The chain is Biosynthetic peptidoglycan transglycosylase from Xanthomonas axonopodis pv. citri (strain 306).